Here is a 397-residue protein sequence, read N- to C-terminus: Glutamyl-tRNA reductase (397 aa).

Substrate contacts are provided by residues 47-50, Ser-98, 103-105, and Gln-109; these read TCGR and ETD. Cys-48 acts as the Nucleophile in catalysis. 177 to 182 is an NADP(+) binding site; it reads GAGAVG.

Belongs to the glutamyl-tRNA reductase family. In terms of assembly, homodimer.

It carries out the reaction (S)-4-amino-5-oxopentanoate + tRNA(Glu) + NADP(+) = L-glutamyl-tRNA(Glu) + NADPH + H(+). Its pathway is porphyrin-containing compound metabolism; protoporphyrin-IX biosynthesis; 5-aminolevulinate from L-glutamyl-tRNA(Glu): step 1/2. Its function is as follows. Catalyzes the NADPH-dependent reduction of glutamyl-tRNA(Glu) to glutamate 1-semialdehyde (GSA). The sequence is that of Glutamyl-tRNA reductase from Pyrobaculum aerophilum (strain ATCC 51768 / DSM 7523 / JCM 9630 / CIP 104966 / NBRC 100827 / IM2).